The sequence spans 245 residues: 1-(5-phosphoribosyl)-5-[(5-phosphoribosylamino)methylideneamino] imidazole-4-carboxamide isomerase (245 aa).

Aspartate 11 (proton acceptor) is an active-site residue. Aspartate 132 (proton donor) is an active-site residue.

It belongs to the HisA/HisF family.

The protein resides in the cytoplasm. The enzyme catalyses 1-(5-phospho-beta-D-ribosyl)-5-[(5-phospho-beta-D-ribosylamino)methylideneamino]imidazole-4-carboxamide = 5-[(5-phospho-1-deoxy-D-ribulos-1-ylimino)methylamino]-1-(5-phospho-beta-D-ribosyl)imidazole-4-carboxamide. It functions in the pathway amino-acid biosynthesis; L-histidine biosynthesis; L-histidine from 5-phospho-alpha-D-ribose 1-diphosphate: step 4/9. The protein is 1-(5-phosphoribosyl)-5-[(5-phosphoribosylamino)methylideneamino] imidazole-4-carboxamide isomerase of Xanthobacter autotrophicus (strain ATCC BAA-1158 / Py2).